Consider the following 574-residue polypeptide: Sulfate adenylyltransferase (574 aa).

Residues 1-169 form an N-terminal region; the sequence is MANTPHGGVL…LEAVNKLNHY (169 aa). Positions 170–394 are catalytic; it reads DYVGLRYTPA…LRESSPPRAL (225 aa). Gln197 contributes to the sulfate binding site. Residues 197 to 200 and 291 to 294 each bind ATP; these read QTRN and GRDH. Active-site residues include Thr198, Arg199, and Asn200. Residue Arg199 participates in sulfate binding. Ala295 is a binding site for sulfate. Val333 contributes to the ATP binding site. Positions 395-574 are allosteric regulation domain; adenylyl-sulfate kinase-like; it reads QGFTIFLTGY…LESEGYFERL (180 aa). Residues 434-437, Arg451, 477-478, and Arg516 contribute to the 3'-phosphoadenylyl sulfate site; these read DTVR and IA.

The protein in the N-terminal section; belongs to the sulfate adenylyltransferase family. This sequence in the C-terminal section; belongs to the APS kinase family. In terms of assembly, homohexamer. Dimer of trimers.

Its subcellular location is the cytoplasm. The catalysed reaction is sulfate + ATP + H(+) = adenosine 5'-phosphosulfate + diphosphate. It functions in the pathway sulfur metabolism; hydrogen sulfide biosynthesis; sulfite from sulfate: step 1/3. With respect to regulation, allosterically inhibited by 3'-phosphoadenosine 5'-phosphosulfate (PAPS). Its function is as follows. Catalyzes the first intracellular reaction of sulfate assimilation, forming adenosine-5'-phosphosulfate (APS) from inorganic sulfate and ATP. Plays an important role in sulfate activation as a component of the biosynthesis pathway of sulfur-containing amino acids. This Emericella nidulans (strain FGSC A4 / ATCC 38163 / CBS 112.46 / NRRL 194 / M139) (Aspergillus nidulans) protein is Sulfate adenylyltransferase.